Here is a 1411-residue protein sequence, read N- to C-terminus: ATP-dependent permease PDR11 (1411 aa).

The Cytoplasmic portion of the chain corresponds to 2-388; sequence SLSKYFNPIP…IGDRNYLISQ (387 aa). The ABC transporter 1 domain maps to 31-273; sequence VQNDEESASE…FHDTLQIKKN (243 aa). The helical transmembrane segment at 389–409 threads the bilayer; it reads FVSVVVQSLVIGSLFYNIPLT. Residues 410–418 are Extracellular-facing; the sequence is TIGSFSRGS. The chain crosses the membrane as a helical span at residues 419 to 439; the sequence is LTFFSILFFTFLSLADMPASF. The Cytoplasmic portion of the chain corresponds to 440–471; sequence QRQPVVRKHVQLHFYYNWVETLATNFFDCCSK. Residues 472–492 traverse the membrane as a helical segment; sequence FILVVIFTIILYFLAHLQYNA. The Extracellular portion of the chain corresponds to 493–494; that stretch reads AR. Residues 495 to 515 form a helical membrane-spanning segment; the sequence is FFIFLLFLSVYNFCMVSLFAL. Topologically, residues 516–524 are cytoplasmic; it reads TALIAPTLS. A helical transmembrane segment spans residues 525–545; that stretch reads MANLLAGILLLAIAMYASYVI. Residues 546–636 are Extracellular-facing; sequence YMKDMHPWFI…YTYHHVWRNF (91 aa). Residue Asn595 is glycosylated (N-linked (GlcNAc...) asparagine). A helical transmembrane segment spans residues 637 to 657; the sequence is GIIIGFLCFFLFCSLLAAEYI. Residues 658-1090 are Cytoplasmic-facing; it reads TPLFTRENLL…QYICTKRDMT (433 aa). Positions 751–979 constitute an ABC transporter 2 domain; it reads ISWKNINYTI…FVAHDRRLTF (229 aa). 782–789 lines the ATP pocket; that stretch reads GESGAGKT. A helical membrane pass occupies residues 1091-1111; sequence YVFAKYALNAGAGLFIGFSFW. At 1112 to 1117 the chain is on the extracellular side; it reads RTKHNI. The helical transmembrane segment at 1118–1138 threads the bilayer; it reads NGLQDAIFLCFMMLCVSSPLI. Topologically, residues 1139–1175 are cytoplasmic; sequence NQVQDKALQSKEVYIAREARSNTYHWTVLLIAQTIVE. The helical transmembrane segment at 1176-1196 threads the bilayer; the sequence is LPLAISSSTLFFLCCYFCCGF. The Extracellular segment spans residues 1197 to 1204; the sequence is ETSARVAG. The chain crosses the membrane as a helical span at residues 1205-1225; that stretch reads VFYLNYILFSMYYLSFGLWLL. Residues 1226 to 1230 lie on the Cytoplasmic side of the membrane; sequence YSAPD. A helical transmembrane segment spans residues 1231–1251; the sequence is LQTAAVFVAFLYSFTASFCGV. Residues 1252–1355 lie on the Extracellular side of the membrane; that stretch reads MQPYSLFPRF…NMSYHHRWRN (104 aa). N-linked (GlcNAc...) asparagine glycosylation is found at Asn1289, Asn1324, and Asn1346. The helical transmembrane segment at 1356-1376 threads the bilayer; the sequence is FGFEWVFVCFNIAAMFVGFYL. Residues 1377 to 1411 are Cytoplasmic-facing; sequence TYIKKIWPSVIDGIKKCIPSMRRSKTSHNPNEQSV.

Belongs to the ABC transporter superfamily. ABCG family. PDR (TC 3.A.1.205) subfamily.

The protein localises to the membrane. Transporter involved in the uptake of sterol. The polypeptide is ATP-dependent permease PDR11 (PDR11) (Saccharomyces cerevisiae (strain ATCC 204508 / S288c) (Baker's yeast)).